We begin with the raw amino-acid sequence, 153 residues long: Endoribonuclease YbeY (153 aa).

Residues His-118, His-122, and His-128 each contribute to the Zn(2+) site.

This sequence belongs to the endoribonuclease YbeY family. Zn(2+) serves as cofactor.

It localises to the cytoplasm. Its function is as follows. Single strand-specific metallo-endoribonuclease involved in late-stage 70S ribosome quality control and in maturation of the 3' terminus of the 16S rRNA. This Staphylococcus carnosus (strain TM300) protein is Endoribonuclease YbeY.